The primary structure comprises 342 residues: Anthranilate phosphoribosyltransferase (342 aa).

Residues G74, 77 to 78 (GD), T82, 84 to 87 (NVST), 101 to 109 (KHGNRSVSG), and S113 contribute to the 5-phospho-alpha-D-ribose 1-diphosphate site. An anthranilate-binding site is contributed by G74. A Mg(2+)-binding site is contributed by S86. Position 104 (N104) interacts with anthranilate. R159 lines the anthranilate pocket. Mg(2+)-binding residues include D218 and E219.

It belongs to the anthranilate phosphoribosyltransferase family. As to quaternary structure, homodimer. The cofactor is Mg(2+).

The catalysed reaction is N-(5-phospho-beta-D-ribosyl)anthranilate + diphosphate = 5-phospho-alpha-D-ribose 1-diphosphate + anthranilate. It functions in the pathway amino-acid biosynthesis; L-tryptophan biosynthesis; L-tryptophan from chorismate: step 2/5. Functionally, catalyzes the transfer of the phosphoribosyl group of 5-phosphorylribose-1-pyrophosphate (PRPP) to anthranilate to yield N-(5'-phosphoribosyl)-anthranilate (PRA). The protein is Anthranilate phosphoribosyltransferase of Sulfolobus acidocaldarius (strain ATCC 33909 / DSM 639 / JCM 8929 / NBRC 15157 / NCIMB 11770).